A 284-amino-acid polypeptide reads, in one-letter code: Homeobox protein SIX1 (284 aa).

The segment at residues 124-183 (GEETSYCFKEKSRGVLREWYAHNPYPSPREKRELAEATGLTTTQVSNWFKNRRQRDRAAE) is a DNA-binding region (homeobox). The disordered stretch occupies residues 168–269 (VSNWFKNRRQ…LQTHQHQLQD (102 aa)). Basic and acidic residues predominate over residues 179–190 (DRAAEAKERENT). Over residues 242 to 269 (RSSNYSLPGLTASQPSHGLQTHQHQLQD) the composition is skewed to polar residues.

This sequence belongs to the SIX/Sine oculis homeobox family. Interacts with DACH1. Interacts with EYA1. Interacts with EYA2. Interacts with CDH1. Interacts with TBX18. Interacts with CEBPA. Interacts with CEBPB. Interacts with EBF2. Phosphorylated during interphase; becomes hyperphosphorylated during mitosis. Hyperphosphorylation impairs binding to promoter elements. Post-translationally, ubiquitinated by the anaphase promoting complex (APC), leading to its proteasomal degradation. In terms of tissue distribution, specifically expressed in skeletal muscle.

Its subcellular location is the nucleus. The protein resides in the cytoplasm. Its function is as follows. Transcription factor that is involved in the regulation of cell proliferation, apoptosis and embryonic development. Plays an important role in the development of several organs, including kidney, muscle and inner ear. Depending on context, functions as a transcriptional repressor or activator. Lacks an activation domain, and requires interaction with EYA family members for transcription activation. Mediates nuclear translocation of EYA1 and EYA2. Binds the 5'-TCA[AG][AG]TTNC-3' motif present in the MEF3 element in the MYOG promoter and CIDEA enhancer. Regulates the expression of numerous genes, including MYC, CCND1 and EZR. Acts as an activator of the IGFBP5 promoter, probably coactivated by EYA2. Repression of precursor cell proliferation in myoblasts is switched to activation through recruitment of EYA3 to the SIX1-DACH1 complex. During myogenesis, seems to act together with EYA2 and DACH2. Regulates the expression of CCNA1. Promotes brown adipocyte differentiation. This is Homeobox protein SIX1 (SIX1) from Homo sapiens (Human).